The sequence spans 61 residues: ATP synthase F(0) complex subunit 8 (61 aa).

Residues 10-32 form a helical membrane-spanning segment; it reads FMILSSTWLIYTIILQPKILSHL.

It belongs to the ATPase protein 8 family. As to quaternary structure, component of the ATP synthase complex composed at least of ATP5F1A/subunit alpha, ATP5F1B/subunit beta, ATP5MC1/subunit c (homooctomer), MT-ATP6/subunit a, MT-ATP8/subunit 8, ATP5ME/subunit e, ATP5MF/subunit f, ATP5MG/subunit g, ATP5MK/subunit k, ATP5MJ/subunit j, ATP5F1C/subunit gamma, ATP5F1D/subunit delta, ATP5F1E/subunit epsilon, ATP5PF/subunit F6, ATP5PB/subunit b, ATP5PD/subunit d, ATP5PO/subunit OSCP. ATP synthase complex consists of a soluble F(1) head domain (subunits alpha(3) and beta(3)) - the catalytic core - and a membrane F(0) domain - the membrane proton channel (subunits c, a, 8, e, f, g, k and j). These two domains are linked by a central stalk (subunits gamma, delta, and epsilon) rotating inside the F1 region and a stationary peripheral stalk (subunits F6, b, d, and OSCP).

It is found in the mitochondrion membrane. Functionally, subunit 8, of the mitochondrial membrane ATP synthase complex (F(1)F(0) ATP synthase or Complex V) that produces ATP from ADP in the presence of a proton gradient across the membrane which is generated by electron transport complexes of the respiratory chain. ATP synthase complex consist of a soluble F(1) head domain - the catalytic core - and a membrane F(1) domain - the membrane proton channel. These two domains are linked by a central stalk rotating inside the F(1) region and a stationary peripheral stalk. During catalysis, ATP synthesis in the catalytic domain of F(1) is coupled via a rotary mechanism of the central stalk subunits to proton translocation. In vivo, can only synthesize ATP although its ATP hydrolase activity can be activated artificially in vitro. Part of the complex F(0) domain. The sequence is that of ATP synthase F(0) complex subunit 8 from Chelonia mydas (Green sea-turtle).